The following is a 160-amino-acid chain: Nucleotide-binding protein Noc_2254 (160 aa).

It belongs to the YajQ family.

In terms of biological role, nucleotide-binding protein. The polypeptide is Nucleotide-binding protein Noc_2254 (Nitrosococcus oceani (strain ATCC 19707 / BCRC 17464 / JCM 30415 / NCIMB 11848 / C-107)).